A 423-amino-acid chain; its full sequence is Replication factor C large subunit (423 aa).

63–70 is an ATP binding site; it reads GPPGIGKT.

This sequence belongs to the activator 1 small subunits family. RfcL subfamily. Heteromultimer composed of small subunits (RfcS) and large subunits (RfcL).

Its function is as follows. Part of the RFC clamp loader complex which loads the PCNA sliding clamp onto DNA. The chain is Replication factor C large subunit from Pyrobaculum islandicum (strain DSM 4184 / JCM 9189 / GEO3).